We begin with the raw amino-acid sequence, 152 residues long: MAVAMSMDANCPKNIFLLCRNTGIGFDDLRLHCIFCTKQLTTTELQAFALRELNVVWRRGAPYGACARCLLVEGIARRLKYWEYSYYVSGVEEETKQSIDTQQIRCYMCHKPLVKEEKDRHRNEKRRLHKISGHWRGSCQYCWSRCTVRIPR.

2 zinc fingers span residues 33-69 and 106-142; these read CIFC…CARC and CYMC…CQYC.

The protein belongs to the papillomaviridae E6 protein family. In terms of assembly, forms homodimers. Interacts with ubiquitin-protein ligase UBE3A/E6-AP; this interaction stimulates UBE3A ubiquitin activity. Interacts with host TP53 and EP300; this interaction inhibits TP53 activity.

Its subcellular location is the host cytoplasm. It localises to the host nucleus. Functionally, plays a major role in the induction and maintenance of cellular transformation. E6 associates with host UBE3A/E6-AP ubiquitin-protein ligase and modulates its activity. Sequesters tumor suppressor TP53 in the host cytoplasm and modulates its activity by interacting with host EP300 that results in the reduction of TP53 acetylation and activation. In turn, apoptosis induced by DNA damage is inhibited. E6 also protects host keratinocytes from apoptosis by mediating the degradation of host BAK1. May also inhibit host immune response. This chain is Protein E6, found in Human papillomavirus 3.